Consider the following 338-residue polypeptide: uncharacterized protein (338 aa).

The Radical SAM core domain occupies 111 to 334 (HLGEERVLVP…LELAEKYNLD (224 aa)). [4Fe-4S] cluster is bound by residues Cys-129, Cys-133, and Cys-136.

[4Fe-4S] cluster is required as a cofactor.

This is an uncharacterized protein from Methanocaldococcus jannaschii (strain ATCC 43067 / DSM 2661 / JAL-1 / JCM 10045 / NBRC 100440) (Methanococcus jannaschii).